Reading from the N-terminus, the 1032-residue chain is Kinesin heavy chain isoform 5A (1032 aa).

Residue A2 is modified to N-acetylalanine. Positions 9–327 (SIKVLCRFRP…LMFGQRAKTI (319 aa)) constitute a Kinesin motor domain. 86 to 93 (GQTSSGKT) contributes to the ATP binding site. Positions 174–315 (VSGPEEILDV…PSSYNDAETK (142 aa)) are microtubule-binding. The tract at residues 271–361 (EGTKSYVPYR…KTKAQKETIA (91 aa)) is necessary for interaction with ZFYVE27. Positions 331-906 (ASVNLELTAE…VDRIKEAVRY (576 aa)) form a coiled coil. An interaction with BICD2 region spans residues 353 to 1032 (TKAQKETIAK…FPLHQETAAS (680 aa)). T397 bears the Phosphothreonine mark. Positions 904–939 (VRYKSSGKRGHSAQIAKPVRPGHYPASSPTNPYGTR) are disordered. Residues 907-1032 (KSSGKRGHSA…FPLHQETAAS (126 aa)) form a globular region.

Belongs to the TRAFAC class myosin-kinesin ATPase superfamily. Kinesin family. Kinesin subfamily. In terms of assembly, oligomer composed of two heavy chains and two light chains. Interacts with GRIP1. Interacts with FMR1 (via C-terminus); this interaction is increased in a mGluR-dependent manner. Interacts with BORCS5. Interacts with ZFYVE27. Interacts with VAPA, VAPB, SURF4, RAB11A (GDP-bound form), RAB11B (GDP-bound form) and RTN3 in a ZFYVE27-dependent manner. Interacts with BICD2. Interacts with DTNB.

The protein localises to the cytoplasm. It is found in the perinuclear region. It localises to the cytoskeleton. The protein resides in the perikaryon. It catalyses the reaction ATP + H2O + a kinesin associated with a microtubule at position (n) = ADP + phosphate a kinesin associated with a microtubule at position (n+1, toward the plus end).. Functionally, microtubule-dependent motor required for slow axonal transport of neurofilament proteins (NFH, NFM and NFL). Can induce formation of neurite-like membrane protrusions in non-neuronal cells in a ZFYVE27-dependent manner. The ZFYVE27-KIF5A complex contributes to the vesicular transport of VAPA, VAPB, SURF4, RAB11A, RAB11B and RTN3 proteins in neurons. Required for anterograde axonal transportation of MAPK8IP3/JIP3 which is essential for MAPK8IP3/JIP3 function in axon elongation. In Pongo abelii (Sumatran orangutan), this protein is Kinesin heavy chain isoform 5A (KIF5A).